A 393-amino-acid polypeptide reads, in one-letter code: Aspartate aminotransferase (393 aa).

Glycine 38, tryptophan 124, and asparagine 174 together coordinate L-aspartate. An N6-(pyridoxal phosphate)lysine modification is found at lysine 237.

It belongs to the class-I pyridoxal-phosphate-dependent aminotransferase family. Homodimer. Requires pyridoxal 5'-phosphate as cofactor.

It is found in the cytoplasm. The catalysed reaction is L-aspartate + 2-oxoglutarate = oxaloacetate + L-glutamate. This chain is Aspartate aminotransferase (aspB), found in Bacillus subtilis (strain 168).